An 85-amino-acid chain; its full sequence is Large ribosomal subunit protein bL27 (85 aa).

The protein belongs to the bacterial ribosomal protein bL27 family.

This is Large ribosomal subunit protein bL27 from Xylella fastidiosa (strain 9a5c).